The following is a 283-amino-acid chain: Demethylrebeccamycin-D-glucose O-methyltransferase (283 aa).

Residues Ser-101, Gln-106, 129-130 (DA), Leu-146, and His-151 contribute to the S-adenosyl-L-methionine site.

It belongs to the methyltransferase superfamily. Monomer.

The enzyme catalyses 4'-demethylrebeccamycin + S-adenosyl-L-methionine = rebeccamycin + S-adenosyl-L-homocysteine + H(+). In terms of biological role, glycosyl O-methyltransferase that catalyzes the final step in the biosynthesis of rebeccamycin, an indolocarbazole alkaloid that inhibits topoisomerase 1. Has broad substrate specificity and functions as glycosyl O-methyltransferase on a number of rebeccamycin analogs. This Lentzea aerocolonigenes (Lechevalieria aerocolonigenes) protein is Demethylrebeccamycin-D-glucose O-methyltransferase (rebM).